The sequence spans 91 residues: MEYEYPIDLDWSNEEMISVINFFNHVEKYYESGVTAGDFMGAYKRFKEIVPAKAEEKQIFNTFEKSSGYNSYKAVQDVKTHSEEQRVKAKK.

The protein belongs to the UPF0223 family.

This is UPF0223 protein SAB0963 from Staphylococcus aureus (strain bovine RF122 / ET3-1).